A 322-amino-acid chain; its full sequence is Cytochrome c biogenesis protein CcsA (322 aa).

The next 6 helical transmembrane spans lie at 9 to 29 (ILTH…LITL), 44 to 64 (GMIV…ASSG), 143 to 163 (MLLS…ILII), 226 to 246 (VISL…VWAN), 259 to 276 (ETWA…LHSR), and 289 to 309 (IASI…LLGI).

This sequence belongs to the CcmF/CycK/Ccl1/NrfE/CcsA family. In terms of assembly, may interact with Ccs1.

Its subcellular location is the plastid. It is found in the chloroplast thylakoid membrane. Required during biogenesis of c-type cytochromes (cytochrome c6 and cytochrome f) at the step of heme attachment. The polypeptide is Cytochrome c biogenesis protein CcsA (Triticum aestivum (Wheat)).